The sequence spans 77 residues: Protein ImpC (77 aa).

This sequence belongs to the DinI family.

The protein is Protein ImpC (impC) of Salmonella typhimurium.